Consider the following 228-residue polypeptide: MTDETEEDDTTQQRSSRNDGVSKNKGKGFKGDKAKRALIGAGGRILFYPTLLYNLVRFKLQSQFRWWDQIDEYLLMGAVPFRKDVPRLKKLGVGGVITLNEPYETLVPSSLYSAYEMEHLVIPTRDYLFAPSIVDITLAVNFIHKNALLGKTTYVHCKAGRGRSTTVVLCYLIEHKSMTVAAAFEHVRSIRPRVLLHPSQRKVVEEFSRLQSPLSESTFIATSGDIVS.

Over residues 1–10 (MTDETEEDDT) the composition is skewed to acidic residues. The segment at 1 to 30 (MTDETEEDDTTQQRSSRNDGVSKNKGKGFK) is disordered. The substrate site is built by Tyr-48 and Asp-126. Residues 66–213 (WWDQIDEYLL…VEEFSRLQSP (148 aa)) form the Tyrosine-protein phosphatase domain. The active-site Phosphocysteine intermediate is Cys-157. The short motif at 157–163 (CKAGRGR) is the Glucan phosphatase signature motif CXAGXGR element. 158-163 (KAGRGR) is a binding site for substrate.

The protein belongs to the protein-tyrosine phosphatase family. Non-receptor class dual specificity subfamily. Expressed in roots, leaves, stems and flowers. In terms of tissue distribution, expressed at low levels in stems and flowers.

The enzyme catalyses O-phospho-L-seryl-[protein] + H2O = L-seryl-[protein] + phosphate. It carries out the reaction O-phospho-L-threonyl-[protein] + H2O = L-threonyl-[protein] + phosphate. It catalyses the reaction O-phospho-L-tyrosyl-[protein] + H2O = L-tyrosyl-[protein] + phosphate. The catalysed reaction is a 1,2-diacyl-sn-glycero-3-phospho-(1'-sn-glycero-3'-phosphate) + H2O = a 1,2-diacyl-sn-glycero-3-phospho-(1'-sn-glycerol) + phosphate. Its pathway is phospholipid metabolism; phosphatidylglycerol biosynthesis; phosphatidylglycerol from CDP-diacylglycerol: step 2/2. Its function is as follows. Exhibits phosphatidylglycerophosphate phosphatase activity. Involved in root growth and columella cells organization. May possess protein phosphatase activity. The sequence is that of Phosphatidylglycerophosphate phosphatase PTPMT2 from Arabidopsis thaliana (Mouse-ear cress).